A 908-amino-acid chain; its full sequence is DNA polymerase I (908 aa).

A 5'-3' exonuclease domain is found at 1–318 (MKELYLIDAL…DDINTIDTEN (318 aa)). The 3'-5' exonuclease domain maps to 319-531 (VKYRSITTKI…MEENGIYLDK (213 aa)). A polymerase region spans residues 532-908 (EYLKEYGKEL…ETGKSWGEIH (377 aa)).

Belongs to the DNA polymerase type-A family.

The catalysed reaction is DNA(n) + a 2'-deoxyribonucleoside 5'-triphosphate = DNA(n+1) + diphosphate. Functionally, in addition to polymerase activity, this DNA polymerase exhibits 3'-5' and 5'-3' exonuclease activity. The protein is DNA polymerase I (polA) of Borreliella burgdorferi (strain ATCC 35210 / DSM 4680 / CIP 102532 / B31) (Borrelia burgdorferi).